Reading from the N-terminus, the 179-residue chain is O-acetyl-ADP-ribose deacetylase (179 aa).

Residues 1 to 175 (MTSRLQVIQG…LYARLLTQQG (175 aa)) enclose the Macro domain. Residues 11-12 (DI), N25, 33-35 (GVD), and 122-126 (STGVY) contribute to the substrate site. The active-site Proton acceptor is the D35.

This sequence belongs to the MacroD-type family. YmdB subfamily. Homodimer. Interacts with RNase III.

The enzyme catalyses 3''-O-acetyl-ADP-D-ribose + H2O = ADP-D-ribose + acetate + H(+). It catalyses the reaction 2''-O-acetyl-ADP-D-ribose + H2O = ADP-D-ribose + acetate + H(+). Deacetylates O-acetyl-ADP ribose to yield ADP-ribose and free acetate. Down-regulates ribonuclease 3 (RNase III) activity. Acts by interacting directly with the region of the ribonuclease that is required for dimerization/activation. This is O-acetyl-ADP-ribose deacetylase from Salmonella typhi.